Consider the following 292-residue polypeptide: UPF0761 membrane protein Ping_3482 (292 aa).

Helical transmembrane passes span 43 to 63, 100 to 120, 139 to 159, 179 to 199, 209 to 229, and 243 to 263; these read LLSIVPLLAVIFYMLAAFPVF, MSMMGIGSLIAIALLLISTID, FTIYWTILSLGPVIIGASLAL, LLSLMPFILTWLTFAGVYTLV, ALIGGLIAAILFFFGTDLFRL, and ALAVIPILFVWIYYSWLIVLI.

Belongs to the UPF0761 family.

It localises to the cell inner membrane. This is UPF0761 membrane protein Ping_3482 from Psychromonas ingrahamii (strain DSM 17664 / CCUG 51855 / 37).